Reading from the N-terminus, the 302-residue chain is CASP-like protein 4A2 (302 aa).

Residues Met-1–Pro-13 show a composition bias toward polar residues. The disordered stretch occupies residues Met-1–Ser-134. At Met-1–Arg-154 the chain is on the cytoplasmic side. The segment covering Val-40–Thr-60 has biased composition (low complexity). The span at Lys-99 to His-129 shows a compositional bias: pro residues. A helical transmembrane segment spans residues Ala-155–Ala-175. The Extracellular segment spans residues Ser-176–Glu-197. The chain crosses the membrane as a helical span at residues Ala-198–Met-218. Topologically, residues Arg-219–Asp-238 are cytoplasmic. A helical membrane pass occupies residues Gln-239 to Ala-256. Topologically, residues Ser-257–Asn-273 are extracellular. Residues Gly-274–Ala-294 form a helical membrane-spanning segment. The Cytoplasmic segment spans residues Tyr-295–Met-302.

This sequence belongs to the Casparian strip membrane proteins (CASP) family. In terms of assembly, homodimer and heterodimers.

It localises to the cell membrane. The chain is CASP-like protein 4A2 from Zea mays (Maize).